The chain runs to 281 residues: tRNA N(3)-cytidine methyltransferase METTL8, mitochondrial (281 aa).

A mitochondrion-targeting transit peptide spans 1–22 (MNVIWRSCICRLRQGKVPHRCQ). Lys-80 participates in a covalent cross-link: Glycyl lysine isopeptide (Lys-Gly) (interchain with G-Cter in SUMO). Trp-89 and Tyr-93 together coordinate S-adenosyl-L-methionine. The segment covering 139–151 (RTQGTETHCQESF) has biased composition (polar residues). The interval 139–180 (RTQGTETHCQESFVSPEPGSRGRSAPDPDLEEYSKGPGKTEP) is disordered. S-adenosyl-L-methionine-binding residues include Gly-194, Asp-220, and Asp-246.

This sequence belongs to the methyltransferase superfamily. METL family. As to quaternary structure, interacts with EP300. In terms of tissue distribution, absent in embryonic lung but is induced in a fibroblast cell line by stretch. Expressed in undifferentiated progenitor cells, while its expression is inhibited by stretch. As to expression, absent in undifferentiated embryonic lung mesenchymal cells, but expression is induced by stretch. In terms of tissue distribution, expressed in mature adipose tissue.

It localises to the mitochondrion. It is found in the cytoplasm. The protein resides in the nucleus. The catalysed reaction is cytidine(32) in tRNA(Ser) + S-adenosyl-L-methionine = N(3)-methylcytidine(32) in tRNA(Ser) + S-adenosyl-L-homocysteine + H(+). It catalyses the reaction cytidine(32) in tRNA(Thr) + S-adenosyl-L-methionine = N(3)-methylcytidine(32) in tRNA(Thr) + S-adenosyl-L-homocysteine + H(+). It carries out the reaction a cytidine in mRNA + S-adenosyl-L-methionine = an N(3)-methylcytidine in mRNA + S-adenosyl-L-homocysteine + H(+). Functionally, mitochondrial S-adenosyl-L-methionine-dependent methyltransferase that mediates N(3)-methylcytidine modification of residue 32 of the tRNA anticodon loop of mitochondrial tRNA(Ser)(UCN) and tRNA(Thr). N(3)-methylcytidine methylation modification regulates mitochondrial translation efficiency and is required for activity of the respiratory chain. N(3)-methylcytidine methylation of mitochondrial tRNA(Ser)(UCN) requires the formation of N(6)-dimethylallyladenosine(37) (i6A37) by TRIT1 as prerequisite. May also mediate N(3)-methylcytidine modification of mRNAs. The existence of N(3)-methylcytidine modification on mRNAs is however unclear, and additional evidences are required to confirm the role of the N(3)-methylcytidine-specific mRNA methyltransferase activity of METTL8 in vivo. Its function is as follows. Overexpression in lung progenitor cells stimulates smooth muscle-specific gene expression and suppresses adipogenic gene expression. In terms of biological role, stimulates adipogenesis. This Mus musculus (Mouse) protein is tRNA N(3)-cytidine methyltransferase METTL8, mitochondrial.